Consider the following 143-residue polypeptide: MLERTLSILKPDVVKRNIAGQVNSYIENSGLKIIIQKMCLLTRYQAEKFYEIHKSQVFFVPLINFMISGPVVVQVLEGENAISLYREIMGATDPKKANSGTIRGDFAENIDANCVHGSDSLENAIREIRFFFSEYELLSLYEC.

The ATP site is built by K10, F58, R86, T92, R103, and N113. H116 acts as the Pros-phosphohistidine intermediate in catalysis.

The protein belongs to the NDK family. As to quaternary structure, homotetramer. The cofactor is Mg(2+).

The protein resides in the cytoplasm. It catalyses the reaction a 2'-deoxyribonucleoside 5'-diphosphate + ATP = a 2'-deoxyribonucleoside 5'-triphosphate + ADP. The enzyme catalyses a ribonucleoside 5'-diphosphate + ATP = a ribonucleoside 5'-triphosphate + ADP. Functionally, major role in the synthesis of nucleoside triphosphates other than ATP. The ATP gamma phosphate is transferred to the NDP beta phosphate via a ping-pong mechanism, using a phosphorylated active-site intermediate. The sequence is that of Nucleoside diphosphate kinase from Ehrlichia ruminantium (strain Welgevonden).